Reading from the N-terminus, the 412-residue chain is Putative competence-damage inducible protein (412 aa).

Belongs to the CinA family.

This Bacillus cereus (strain AH820) protein is Putative competence-damage inducible protein.